Consider the following 288-residue polypeptide: Fe-S cluster assembly protein dre2 (288 aa).

The tract at residues 1–127 (MSSSVLVLTS…LSRPNQVEAV (127 aa)) is N-terminal SAM-like domain. The interval 128–177 (PIKLSNKNGQSASKNKILDFLKSDKENLISGDDDQELIDEDELLDESAHD) is linker. [2Fe-2S] cluster contacts are provided by Cys185, Cys196, Cys199, and Cys201. The interval 185-201 (CKPEPGKKKRACKNCTC) is fe-S binding site A. Cys244, Cys247, Cys255, and Cys258 together coordinate [4Fe-4S] cluster. 2 short sequence motifs (cx2C motif) span residues 244–247 (CGNC) and 255–258 (CSGC). Positions 244-258 (CGNCYLGDAFRCSGC) are fe-S binding site B.

This sequence belongs to the anamorsin family. In terms of assembly, monomer. Interacts with tah18. Interacts with tim40. Requires [2Fe-2S] cluster as cofactor. [4Fe-4S] cluster serves as cofactor.

It localises to the cytoplasm. The protein resides in the mitochondrion intermembrane space. In terms of biological role, component of the cytosolic iron-sulfur (Fe-S) protein assembly (CIA) machinery required for the maturation of extramitochondrial Fe-S proteins. Part of an electron transfer chain functioning in an early step of cytosolic Fe-S biogenesis, facilitating the de novo assembly of a [4Fe-4S] cluster on the scaffold complex cfd1-nbp35. Electrons are transferred to dre2 from NADPH via the FAD- and FMN-containing protein tah18. Tah18-dre2 are also required for the assembly of the diferric tyrosyl radical cofactor of ribonucleotide reductase (RNR), probably by providing electrons for reduction during radical cofactor maturation in the catalytic small subunit suc22. This is Fe-S cluster assembly protein dre2 from Schizosaccharomyces pombe (strain 972 / ATCC 24843) (Fission yeast).